The following is a 393-amino-acid chain: uncharacterized protein (393 aa).

ATP is bound at residue 67-74 (GPDGMGKS).

This is an uncharacterized protein from Mycobacterium tuberculosis (strain CDC 1551 / Oshkosh).